The following is a 487-amino-acid chain: N-succinylglutamate 5-semialdehyde dehydrogenase (487 aa).

221–226 contacts NAD(+); that stretch reads GSSDTG. Active-site residues include E244 and C278.

This sequence belongs to the aldehyde dehydrogenase family. AstD subfamily.

It carries out the reaction N-succinyl-L-glutamate 5-semialdehyde + NAD(+) + H2O = N-succinyl-L-glutamate + NADH + 2 H(+). It functions in the pathway amino-acid degradation; L-arginine degradation via AST pathway; L-glutamate and succinate from L-arginine: step 4/5. Catalyzes the NAD-dependent reduction of succinylglutamate semialdehyde into succinylglutamate. The chain is N-succinylglutamate 5-semialdehyde dehydrogenase from Burkholderia thailandensis (strain ATCC 700388 / DSM 13276 / CCUG 48851 / CIP 106301 / E264).